The chain runs to 430 residues: Serine--tRNA ligase (430 aa).

237 to 239 (TAE) serves as a coordination point for L-serine. ATP is bound at residue 268–270 (RRE). Residue glutamate 291 coordinates L-serine. 355 to 358 (EISS) contacts ATP. Serine 391 contributes to the L-serine binding site.

It belongs to the class-II aminoacyl-tRNA synthetase family. Type-1 seryl-tRNA synthetase subfamily. Homodimer. The tRNA molecule binds across the dimer.

It is found in the cytoplasm. The enzyme catalyses tRNA(Ser) + L-serine + ATP = L-seryl-tRNA(Ser) + AMP + diphosphate + H(+). It catalyses the reaction tRNA(Sec) + L-serine + ATP = L-seryl-tRNA(Sec) + AMP + diphosphate + H(+). Its pathway is aminoacyl-tRNA biosynthesis; selenocysteinyl-tRNA(Sec) biosynthesis; L-seryl-tRNA(Sec) from L-serine and tRNA(Sec): step 1/1. Functionally, catalyzes the attachment of serine to tRNA(Ser). Is also able to aminoacylate tRNA(Sec) with serine, to form the misacylated tRNA L-seryl-tRNA(Sec), which will be further converted into selenocysteinyl-tRNA(Sec). This Magnetococcus marinus (strain ATCC BAA-1437 / JCM 17883 / MC-1) protein is Serine--tRNA ligase.